Consider the following 222-residue polypeptide: 3-dehydroquinate dehydratase (222 aa).

3-dehydroquinate is bound by residues 29 to 31 (ELR) and Arg-55. The Proton donor/acceptor role is filled by His-112. Lys-139 functions as the Schiff-base intermediate with substrate in the catalytic mechanism. 3-dehydroquinate contacts are provided by Arg-178, Ser-199, and Gln-203.

This sequence belongs to the type-I 3-dehydroquinase family. In terms of assembly, homodimer.

The enzyme catalyses 3-dehydroquinate = 3-dehydroshikimate + H2O. It functions in the pathway metabolic intermediate biosynthesis; chorismate biosynthesis; chorismate from D-erythrose 4-phosphate and phosphoenolpyruvate: step 3/7. Involved in the third step of the chorismate pathway, which leads to the biosynthesis of aromatic amino acids. Catalyzes the cis-dehydration of 3-dehydroquinate (DHQ) and introduces the first double bond of the aromatic ring to yield 3-dehydroshikimate. In Dehalococcoides mccartyi (strain ATCC BAA-2100 / JCM 16839 / KCTC 5957 / BAV1), this protein is 3-dehydroquinate dehydratase.